Reading from the N-terminus, the 280-residue chain is Probable endonuclease 4 (280 aa).

9 residues coordinate Zn(2+): His69, His109, Glu145, Asp179, His182, His216, Asp229, His231, and Glu261.

This sequence belongs to the AP endonuclease 2 family. It depends on Zn(2+) as a cofactor.

It catalyses the reaction Endonucleolytic cleavage to 5'-phosphooligonucleotide end-products.. Its function is as follows. Endonuclease IV plays a role in DNA repair. It cleaves phosphodiester bonds at apurinic or apyrimidinic (AP) sites, generating a 3'-hydroxyl group and a 5'-terminal sugar phosphate. This is Probable endonuclease 4 from Pelodictyon phaeoclathratiforme (strain DSM 5477 / BU-1).